Here is a 287-residue protein sequence, read N- to C-terminus: Ferredoxin-type protein NapH (287 aa).

At 1–29 (MANRKRDAGREALEKKGWWRSHRWLVLRR) the chain is on the cytoplasmic side. Residues 30 to 50 (LCQFFVLGMFLSGPWFGVWIL) form a helical membrane-spanning segment. At 51–79 (HGNYSSSLLFDTVPLTDPLMTLQSLASGH) the chain is on the periplasmic side. Residues 80–100 (LPATVALTGAVIITVLYALAG) traverse the membrane as a helical segment. Residues 101 to 139 (KRLFCSWVCPLNPITDLANWLRRRFDLNQSATIPRHIRY) are Cytoplasmic-facing. The helical transmembrane segment at 140–160 (VLLVVILVGSALTGTLIWEWI) threads the bilayer. Topologically, residues 161-170 (NPVSLMGRSL) are periplasmic. A helical membrane pass occupies residues 171-191 (VMGFGSGALLILALFLFDLLV). At 192–287 (VEHGWCGHIC…TTRWSSGAKS (96 aa)) the chain is on the cytoplasmic side. 2 4Fe-4S ferredoxin-type domains span residues 217-247 (TVAA…APVL) and 251-280 (SPVQ…ITTR). [4Fe-4S] cluster is bound by residues Cys226, Cys229, Cys232, Cys236, Cys260, Cys263, Cys266, and Cys270.

As to quaternary structure, interacts with NapC. [4Fe-4S] cluster serves as cofactor.

Its subcellular location is the cell inner membrane. In terms of biological role, required for electron transfer from ubiquinol, via NapC, to the periplasmic nitrate reductase NapAB complex. In Escherichia coli (strain K12), this protein is Ferredoxin-type protein NapH (napH).